A 461-amino-acid chain; its full sequence is Major capsid protein (461 aa).

A compositionally biased stretch (polar residues) spans 1–18; it reads MSTPTISADTTAQNATST. Positions 1-22 are disordered; the sequence is MSTPTISADTTAQNATSTEVRE.

The protein resides in the virion. In terms of biological role, major protein of the capsid. The chain is Major capsid protein (MCP) from Spodoptera frugiperda ascovirus 1a (SfAV-1a).